Consider the following 139-residue polypeptide: Nucleoside diphosphate kinase (139 aa).

ATP contacts are provided by Lys9, Phe57, Arg85, Thr91, Arg102, and Asn112. His115 (pros-phosphohistidine intermediate) is an active-site residue.

It belongs to the NDK family. In terms of assembly, homotetramer. The cofactor is Mg(2+).

It is found in the cytoplasm. It catalyses the reaction a 2'-deoxyribonucleoside 5'-diphosphate + ATP = a 2'-deoxyribonucleoside 5'-triphosphate + ADP. It carries out the reaction a ribonucleoside 5'-diphosphate + ATP = a ribonucleoside 5'-triphosphate + ADP. Major role in the synthesis of nucleoside triphosphates other than ATP. The ATP gamma phosphate is transferred to the NDP beta phosphate via a ping-pong mechanism, using a phosphorylated active-site intermediate. The chain is Nucleoside diphosphate kinase from Exiguobacterium sp. (strain ATCC BAA-1283 / AT1b).